Consider the following 440-residue polypeptide: MKMAGWKKKLCRGHHLWALGCYMLLAVVSLRLSLRFKCDVDSLDLESRDFQSQHCRDMLYNSLKLPAKRSINCSGITRGDQEAVVQALLDNLEVKKKRSPLTGTYYLNITRDCERFKAQRKFIQFPLSKEELDFPIAYSMVVHEKIENFERLLRAVYAPQNIYCVHVDVKSPETFKEAVKAIISCFPNVFMASKLVPVVYASWSRVQADLNCMEDLLQSSVPWKYLLNTCGTDFPIKTNAEMVLALKMLKGKNSMESEVPSESKKNRWKYRYEVTDTLYPTSKMKDPPPDNLPMFTGNAYFVASRAFVQHVLDNPKSQRLVEWVKDTYSPDEHLWATLQRAPWMPGSVPSHPKYHISDMTAIARLVKWQYHEGDVSMGAPYAPCSGIHRRAICIYGAGDLYWILQNHHLLANKFDPRVDDNVLQCLEEYLRHKAIYGTEL.

Over 1–12 (MKMAGWKKKLCR) the chain is Cytoplasmic. Residues 13–30 (GHHLWALGCYMLLAVVSL) traverse the membrane as a helical; Signal-anchor for type II membrane protein segment. Over 31 to 440 (RLSLRFKCDV…RHKAIYGTEL (410 aa)) the chain is Lumenal. 2 N-linked (GlcNAc...) asparagine; by host glycosylation sites follow: asparagine 72 and asparagine 108. 4 disulfide bridges follow: cysteine 73–cysteine 230, cysteine 164–cysteine 384, cysteine 185–cysteine 212, and cysteine 393–cysteine 425.

It belongs to the glycosyltransferase 14 family.

The protein localises to the host Golgi apparatus membrane. The enzyme catalyses a 3-O-[beta-D-galactosyl-(1-&gt;3)-N-acetyl-alpha-D-galactosaminyl]-L-seryl-[protein] + UDP-N-acetyl-alpha-D-glucosamine = 3-O-{beta-D-galactosyl-(1-&gt;3)-[N-acetyl-beta-D-glucosaminyl-(1-&gt;6)]-N-acetyl-alpha-D-galactosaminyl}-L-seryl-[protein] + UDP + H(+). The catalysed reaction is a 3-O-[beta-D-galactosyl-(1-&gt;3)-N-acetyl-alpha-D-galactosaminyl]-L-threonyl-[protein] + UDP-N-acetyl-alpha-D-glucosamine = a 3-O-{beta-D-galactosyl-(1-&gt;3)-[N-acetyl-beta-D-glucosaminyl-(1-&gt;6)]-N-acetyl-alpha-D-galactosaminyl}-L-threonyl-[protein] + UDP + H(+). It carries out the reaction a beta-D-Gal-(1-&gt;4)-beta-D-GlcNAc-(1-&gt;3)-beta-D-Gal-(1-&gt;4)-beta-D-GlcNAc derivative + UDP-N-acetyl-alpha-D-glucosamine = a beta-D-Gal-(1-&gt;4)-beta-D-GlcNAc-(1-&gt;3)-[beta-D-GlcNAc-(1-&gt;6)]-beta-D-Gal-(1-&gt;4)-N-acetyl-beta-D-glucosaminyl derivative + UDP + H(+). It catalyses the reaction 3-O-[N-acetyl-beta-D-glucosaminyl-(1-&gt;3)-N-acetyl-alpha-D-galactosaminyl]-L-seryl-[protein] + UDP-N-acetyl-alpha-D-glucosamine = 3-O-[N-acetyl-beta-D-glucosaminyl-(1-&gt;3)-[N-acetyl-beta-D-glucosaminyl-(1-&gt;6)]-N-acetyl-alpha-D-galactosaminyl]-L-seryl-[protein] + UDP + H(+). The enzyme catalyses a 3-O-[N-acetyl-beta-D-glucosaminyl-(1-&gt;3)-N-acetyl-alpha-D-galactosaminyl]-L-threonyl-[protein] + UDP-N-acetyl-alpha-D-glucosamine = 3-O-[N-acetyl-beta-D-glucosaminyl-(1-&gt;3)-[N-acetyl-beta-D-glucosaminyl-(1-&gt;6)]-N-acetyl-alpha-D-galactosaminyl]-L-threonyl-[protein] + UDP + H(+). The protein operates within protein modification; protein glycosylation. Its function is as follows. Non-essential glycosyltransferase that can synthesize all known mucin beta 6 N-acetylglucosaminides. Mediates core 2 and core 4 O-glycan branching, 2 important steps in mucin-type biosynthesis. Has also I-branching enzyme activity by converting linear into branched poly-N-acetyllactosaminoglycans. Contributes to the post-translational modifications of structural proteins. This Bos taurus (Bovine) protein is Beta-1,3-galactosyl-O-glycosyl-glycoprotein beta-1,6-N-acetylglucosaminyltransferase (Bo17).